Consider the following 358-residue polypeptide: Transmembrane protein 144 homolog B (358 aa).

10 consecutive transmembrane segments (helical) span residues 6–26, 35–55, 60–79, 86–108, 122–142, 211–231, 244–264, 279–299, 307–327, and 337–357; these read VIGY…YVPV, LAFT…AMFI, IFDP…NFCV, IGIG…FTGK, PALN…FFFI, ILGI…MVPM, LSFV…VFIV, IFPS…LMVA, IGFP…SVFY, and LLIL…LALS.

The protein belongs to the TMEM144 family.

It is found in the membrane. The polypeptide is Transmembrane protein 144 homolog B (tmem144B) (Dictyostelium discoideum (Social amoeba)).